Here is a 349-residue protein sequence, read N- to C-terminus: Magnesium-protoporphyrin IX monomethyl ester [oxidative] cyclase (349 aa).

A disordered region spans residues 1-22; the sequence is MTATASASSVSGSLGRNELPPH.

Belongs to the AcsF family. Fe cation is required as a cofactor.

It catalyses the reaction Mg-protoporphyrin IX 13-monomethyl ester + 3 NADPH + 3 O2 + 2 H(+) = 3,8-divinyl protochlorophyllide a + 3 NADP(+) + 5 H2O. It participates in porphyrin-containing compound metabolism; chlorophyll biosynthesis (light-independent). Catalyzes the formation of the isocyclic ring in chlorophyll biosynthesis. Mediates the cyclase reaction, which results in the formation of divinylprotochlorophyllide (Pchlide) characteristic of all chlorophylls from magnesium-protoporphyrin IX 13-monomethyl ester (MgPMME). The polypeptide is Magnesium-protoporphyrin IX monomethyl ester [oxidative] cyclase (Prochlorococcus marinus (strain MIT 9211)).